The primary structure comprises 94 residues: MNQPQLPSPPQLRFSCSVIFSRNLVLTLTQSHPLCGTSLEPTPMCKRVVQQCYLEPHHQTLRSPGKLSLDSFTSLTSLHASSACTSPRWSGTCY.

This is an uncharacterized protein from Narcissus mosaic virus (NMV).